A 33-amino-acid chain; its full sequence is Mu-theraphotoxin-Osp1a (33 aa).

3 disulfides stabilise this stretch: Cys-2–Cys-17, Cys-9–Cys-22, and Cys-16–Cys-29.

This sequence belongs to the neurotoxin 10 (Hwtx-1) family. In terms of tissue distribution, expressed by the venom gland.

The protein localises to the secreted. Functionally, voltage-gated sodium channel Nav1.7/SCN9A inhibitor. The protein is Mu-theraphotoxin-Osp1a of Orphnaecus sp. (strain Sibaliw/Philippines) (Tarantula spider).